The following is a 558-amino-acid chain: Small ribosomal subunit protein bS1 (558 aa).

6 S1 motif domains span residues 21–87, 105–171, 192–260, 277–347, 364–434, and 451–520; these read GSII…LSRE, SETV…VSRR, GMHV…LGLK, ETKL…LGLK, GVHV…LGIK, and GAII…LTIH.

The protein belongs to the bacterial ribosomal protein bS1 family.

In terms of biological role, binds mRNA; thus facilitating recognition of the initiation point. It is needed to translate mRNA with a short Shine-Dalgarno (SD) purine-rich sequence. This Buchnera aphidicola subsp. Acyrthosiphon pisum (strain APS) (Acyrthosiphon pisum symbiotic bacterium) protein is Small ribosomal subunit protein bS1 (rpsA).